The chain runs to 367 residues: Dual specificity protein phosphatase 1 (367 aa).

A Rhodanese domain is found at 20–137 (GAAQCLLLDC…FSASCPELCS (118 aa)). A Tyrosine-protein phosphatase domain is found at 173–314 (GPVEILSFLY…LLQFESQVLA (142 aa)). The Phosphocysteine intermediate role is filled by cysteine 258. Phosphoserine; by MAPK1 and MAPK3 is present on residues serine 359 and serine 364.

It belongs to the protein-tyrosine phosphatase family. Non-receptor class dual specificity subfamily. Phosphorylation at Ser-359 and Ser-364 by MAPK1/ERK2 and MAPK3/ERK1 reduces its rate of degradation. Post-translationally, 'Lys-48'-linked polyubiquitinated by NEURL3, leading to proteasomal degradation.

It is found in the nucleus. It carries out the reaction O-phospho-L-tyrosyl-[protein] + H2O = L-tyrosyl-[protein] + phosphate. The catalysed reaction is O-phospho-L-seryl-[protein] + H2O = L-seryl-[protein] + phosphate. The enzyme catalyses O-phospho-L-threonyl-[protein] + H2O = L-threonyl-[protein] + phosphate. In terms of biological role, dual specificity phosphatase that dephosphorylates MAP kinase MAPK1/ERK2 on both 'Thr-183' and 'Tyr-185', regulating its activity during the meiotic cell cycle. In Mus musculus (Mouse), this protein is Dual specificity protein phosphatase 1.